An 843-amino-acid polypeptide reads, in one-letter code: Major vault protein alpha (843 aa).

Position 2 is an N-acetylalanine (Ala2). 9 MVP repeats span residues 2-56 (ADLN…IPQR), 57-111 (NYCT…KVTA), 112-163 (LQVV…EEIK), 164-216 (ATII…EIVN), 217-272 (AYVL…GEVH), 273-324 (ITTL…IHNI), 325-376 (YVLT…KRES), 377-442 (IPLD…STRV), and 443-505 (VTYR…FLGP). Residues 643–663 (QEAAARHEAERLEQGARGRLE) form a disordered region. Residues 646–663 (AARHEAERLEQGARGRLE) show a composition bias toward basic and acidic residues.

The vault ribonucleoprotein particle is a huge (400 A x 670 A) cage structure of 12.9 MDa. It consists of a dimer of half-vaults, with each half-vault comprising 39 identical major vault protein (MVP) chains. Dictyostelium is one of the few organisms in which the major component is actually two proteins (alpha and beta).

The protein localises to the cytoplasm. It localises to the nucleus. In terms of biological role, unknown, though MVP-alpha is required for normal vault structure. This is Major vault protein alpha (mvpA) from Dictyostelium discoideum (Social amoeba).